Reading from the N-terminus, the 473-residue chain is Ribulose bisphosphate carboxylase large chain (473 aa).

Substrate-binding residues include N116 and T166. The active-site Proton acceptor is the K168. Residue K170 coordinates substrate. K194, D196, and E197 together coordinate Mg(2+). The residue at position 194 (K194) is an N6-carboxylysine. H287 acts as the Proton acceptor in catalysis. Residues R288, H320, and S372 each coordinate substrate.

The protein belongs to the RuBisCO large chain family. Type I subfamily. In terms of assembly, heterohexadecamer of 8 large chains and 8 small chains. Mg(2+) is required as a cofactor.

The catalysed reaction is 2 (2R)-3-phosphoglycerate + 2 H(+) = D-ribulose 1,5-bisphosphate + CO2 + H2O. It carries out the reaction D-ribulose 1,5-bisphosphate + O2 = 2-phosphoglycolate + (2R)-3-phosphoglycerate + 2 H(+). Its function is as follows. RuBisCO catalyzes two reactions: the carboxylation of D-ribulose 1,5-bisphosphate, the primary event in carbon dioxide fixation, as well as the oxidative fragmentation of the pentose substrate. Both reactions occur simultaneously and in competition at the same active site. In Nitrosospira sp. (strain TCH716), this protein is Ribulose bisphosphate carboxylase large chain.